A 133-amino-acid polypeptide reads, in one-letter code: Holo-[acyl-carrier-protein] synthase (133 aa).

Mg(2+)-binding residues include D8 and E57.

Belongs to the P-Pant transferase superfamily. AcpS family. Requires Mg(2+) as cofactor.

It is found in the cytoplasm. It carries out the reaction apo-[ACP] + CoA = holo-[ACP] + adenosine 3',5'-bisphosphate + H(+). Transfers the 4'-phosphopantetheine moiety from coenzyme A to a Ser of acyl-carrier-protein. The polypeptide is Holo-[acyl-carrier-protein] synthase (Bartonella henselae (strain ATCC 49882 / DSM 28221 / CCUG 30454 / Houston 1) (Rochalimaea henselae)).